We begin with the raw amino-acid sequence, 443 residues long: Probable D-serine dehydratase (443 aa).

K118 is subject to N6-(pyridoxal phosphate)lysine.

The protein belongs to the serine/threonine dehydratase family. DsdA subfamily. The cofactor is pyridoxal 5'-phosphate.

The catalysed reaction is D-serine = pyruvate + NH4(+). The polypeptide is Probable D-serine dehydratase (Aeromonas hydrophila subsp. hydrophila (strain ATCC 7966 / DSM 30187 / BCRC 13018 / CCUG 14551 / JCM 1027 / KCTC 2358 / NCIMB 9240 / NCTC 8049)).